Reading from the N-terminus, the 83-residue chain is MDFQALLSQLPQETLFVLLAYGAVLGTYLIAVPLALYAWINLRWYRMSKFERLGVYGLVFLFFPGMIVFAPFINLRLSGQGEV.

A run of 2 helical transmembrane segments spans residues 15 to 35 and 53 to 73; these read LFVLLAYGAVLGTYLIAVPLA and LGVYGLVFLFFPGMIVFAPFI.

This sequence belongs to the complex I NdhL subunit family. As to quaternary structure, NDH-1 can be composed of about 15 different subunits; different subcomplexes with different compositions have been identified which probably have different functions.

It localises to the cellular thylakoid membrane. The enzyme catalyses a plastoquinone + NADH + (n+1) H(+)(in) = a plastoquinol + NAD(+) + n H(+)(out). The catalysed reaction is a plastoquinone + NADPH + (n+1) H(+)(in) = a plastoquinol + NADP(+) + n H(+)(out). NDH-1 shuttles electrons from an unknown electron donor, via FMN and iron-sulfur (Fe-S) centers, to quinones in the respiratory and/or the photosynthetic chain. The immediate electron acceptor for the enzyme in this species is believed to be plastoquinone. Couples the redox reaction to proton translocation, and thus conserves the redox energy in a proton gradient. Cyanobacterial NDH-1 also plays a role in inorganic carbon-concentration. This Synechococcus sp. (strain CC9902) protein is NAD(P)H-quinone oxidoreductase subunit L.